The following is a 475-amino-acid chain: Argininosuccinate lyase (475 aa).

The protein belongs to the lyase 1 family. Argininosuccinate lyase subfamily.

It localises to the cytoplasm. The catalysed reaction is 2-(N(omega)-L-arginino)succinate = fumarate + L-arginine. It participates in amino-acid biosynthesis; L-arginine biosynthesis; L-arginine from L-ornithine and carbamoyl phosphate: step 3/3. This Streptomyces coelicolor (strain ATCC BAA-471 / A3(2) / M145) protein is Argininosuccinate lyase.